Here is a 1115-residue protein sequence, read N- to C-terminus: PAN2-PAN3 deadenylation complex catalytic subunit PAN2 (1115 aa).

WD repeat units follow at residues 27–66 (NRDKEITAISFDEKANLIWSGDSYGCISSYDPTFQLYTRY), 112–153 (AAFS…GCLD), 155–194 (LLNYSSKVKLMCSNNKVLSIGRQTGTVDLLDPTSNRTIKS), 197–236 (AHSASISAMDLRDNTLVTVGKSKRFYNLYADPFVNVYDLR), and 295–334 (HPCQSIKKLCLSPNGDVLGILEADNHLDTWRRSSNNMGMF). A linker region spans residues 337–473 (TPEMLAYPDY…IQTYTSINKY (137 aa)). Residues 474-855 (EVPPAYSRLP…TPEIIIYCDA (382 aa)) enclose the USP domain. Residues Cys-660, His-662, Cys-713, and Cys-716 each contribute to the Zn(2+) site. The 173-residue stretch at 907–1079 (VAIDAEFVSL…EDAHTALILY (173 aa)) folds into the Exonuclease domain. Residues Asp-910, Glu-912, Asp-1020, and Asp-1071 each coordinate a divalent metal cation.

It belongs to the peptidase C19 family. PAN2 subfamily. Forms a heterotrimer with an asymmetric homodimer of the regulatory subunit PAN3 to form the poly(A)-nuclease (PAN) deadenylation complex. It depends on a divalent metal cation as a cofactor.

The protein localises to the cytoplasm. It catalyses the reaction Exonucleolytic cleavage of poly(A) to 5'-AMP.. With respect to regulation, positively regulated by the regulatory subunit PAN3. Negatively regulated by PAB1-binding protein PBP1. Inhibited under stress conditions. Inhibition of deadenylation under stress increases mRNA stability, which may be a mechanism to retain the majority of the cytoplasmic pool of mRNAs for later reuse and recovery from stress. Its function is as follows. Catalytic subunit of the poly(A)-nuclease (PAN) deadenylation complex, one of two cytoplasmic mRNA deadenylases involved in mRNA turnover. PAN specifically shortens poly(A) tails of RNA and the activity is stimulated by poly(A)-binding protein PAB1. PAN deadenylation is followed by rapid degradation of the shortened mRNA tails by the CCR4-NOT complex. Deadenylated mRNAs are then degraded by two alternative mechanisms, namely exosome-mediated 3'-5' exonucleolytic degradation, or deadenylation-dependent mRNA decaping by DCP1-DCP2 and subsequent 5'-3' exonucleolytic degradation by XRN1. May also be involved in post-transcriptional maturation of mRNA poly(A) tails, trimming the tails from their synthesized length to the slightly shorter, apparently messenger-specific length found on newly exported mRNAs. PAN cooperates with protein kinase DUN1 in the regulation of RAD5 mRNA levels and cell survival in response to replicational stress. The sequence is that of PAN2-PAN3 deadenylation complex catalytic subunit PAN2 from Saccharomyces cerevisiae (strain ATCC 204508 / S288c) (Baker's yeast).